The following is a 207-amino-acid chain: LysM and putative peptidoglycan-binding domain-containing protein 2 (207 aa).

One can recognise a LysM domain in the interval 61–105 (IEHRLSPSDTLQGIALKYGVTMEQIKRANKLFSTDCIFLRKSLNI). Positions 186 to 207 (AQRLKEEDLRHDDSYATCSYQH) are disordered. Residues 188–199 (RLKEEDLRHDDS) are compositionally biased toward basic and acidic residues.

The chain is LysM and putative peptidoglycan-binding domain-containing protein 2 (lysmd2) from Xenopus tropicalis (Western clawed frog).